Reading from the N-terminus, the 198-residue chain is tRNA (pseudouridine(54)-N(1))-methyltransferase (198 aa).

S-adenosyl-L-methionine contacts are provided by residues Leu130, Gly153, 176-181, and Cys186; that span reads LSPLEL.

This sequence belongs to the methyltransferase superfamily. TrmY family. Homodimer.

The protein resides in the cytoplasm. It carries out the reaction pseudouridine(54) in tRNA + S-adenosyl-L-methionine = N(1)-methylpseudouridine(54) in tRNA + S-adenosyl-L-homocysteine + H(+). In terms of biological role, specifically catalyzes the N1-methylation of pseudouridine at position 54 (Psi54) in tRNAs. The chain is tRNA (pseudouridine(54)-N(1))-methyltransferase from Methanococcus maripaludis (strain C6 / ATCC BAA-1332).